A 49-amino-acid chain; its full sequence is Isoflavone reductase homolog 2 (49 aa).

5–11 (GGTGYIG) is a binding site for NADP(+).

The protein belongs to the NmrA-type oxidoreductase family. Isoflavone reductase subfamily.

The protein resides in the cytoplasm. The sequence is that of Isoflavone reductase homolog 2 from Pseudotsuga menziesii (Douglas-fir).